The sequence spans 478 residues: MSVCLEVDYTLYTELKKFLNGQPLFLFNADKNYVEVVPSSTLKFYIPIGLFSNSNVALIRPVHTTCTNHIESVDVTFPNLYPLQKHVVAEVTTSMRQKLSTHRPMYMTLHLSCGFGKTVTACYLMVVHRRKTVICVPNKMLIHQWKVAVELTKLSYIISTDGVSMLLKQLRTKTADVLIIVSRHLSNDYFCKKIHDEYDTFILDESHMYNLMNNSALTKFLTFYPPRICYFLTATPRLMNRIYCNDVVNVLKVSALTKRLKIVEYFFEPYSTDCIRQMAKHLNTENNKYHIYTEKILTEDLPRNNLIVETVSREFRNETIERVIVIVKLRKHMTFFYDRFVKEFGTDYVYLGDAKNKDTSTVVKSLLQKKKFIFVSTSHYSGTGLDIPSLDSLVICCAVLNSMQIEQLLGRVCRESESVKKTVFLFPNTSIREIKHSLGFFTERIVSISTDKLGFEQEGIEGTKEEPVLTKAFSSQTR.

A Helicase ATP-binding domain is found at 98 to 254 (KLSTHRPMYM…NDVVNVLKVS (157 aa)). 111 to 118 (LSCGFGKT) contacts ATP. The short motif at 204 to 207 (DESH) is the DESH box element. One can recognise a Helicase C-terminal domain in the interval 302–468 (PRNNLIVETV…GIEGTKEEPV (167 aa)).

This sequence belongs to the helicase family. Poxviruses subfamily. In terms of assembly, interacts with G2. Might be part of a transcription complex composed at least of G2, A18, and H5.

Its subcellular location is the virion. DNA helicase which seems to act as a postreplicative transcription termination factor. Involved in ATP-dependent release of nascent RNA. Forms a stable complex with single-stranded DNA, and to a lesser extent RNA. This chain is Transcript termination protein A18, found in Rabbit fibroma virus (strain Kasza) (RFV).